The chain runs to 161 residues: MSYVPHVPYVPTPEKVVRRMLEIAKVSQDDIVYDLGCGDGRIIITAAKDFNVKKAVGVEINDERIREALANIEKNGVTGRASIVKGNFFEVDISEATVVTMFLLTNVNEMLKPKLEKELKPGTRVVSHEFEIRGWNPKEVIKVEDGNMNHTVYLYVIGEHK.

Positions 34–40 match the DxGxGxG SAM-binding motif motif; sequence DLGCGDG.

It belongs to the class I-like SAM-binding methyltransferase superfamily. As to quaternary structure, monomer.

It catalyses the reaction L-lysyl-[protein] + S-adenosyl-L-methionine = N(6)-methyl-L-lysyl-[protein] + S-adenosyl-L-homocysteine + H(+). Its function is as follows. Catalyzes the methylation of lysine residues in target proteins, using S-adenosyl-L-methionine (SAM) as the methyl donor. Exhibits broad substrate specificity, being able to methylate the crenarchaeal chromatin protein Cren7 primarily at 'Lys-11', 'Lys-16' and 'Lys-31', as well as a number of recombinant Sulfolobus proteins in vitro. Methylates lysine residues in a rather sequence-independent manner. The sequence is that of Protein-lysine N-methyltransferase from Saccharolobus islandicus (strain REY15A) (Sulfolobus islandicus).